A 415-amino-acid polypeptide reads, in one-letter code: Histone acetyltransferase type B subunit 2 (415 aa).

5 WD repeats span residues 118–158 (ENNF…KTAI), 163–203 (PHED…ATDL), 211–251 (THKD…EPVS), 256–296 (PESE…TKSA), and 307–347 (GHSD…EEQA). Residues 349–353 (EDAED) are interaction with the histone H4 N-terminus. Residues 364 to 404 (GHTGAVTDLSWCPYKDWTIGSVADDNIVHLWEIGKTLLNAE) form a WD 6 repeat.

This sequence belongs to the WD repeat RBAP46/RBAP48/MSI1 family. As to quaternary structure, component of the HAT-B complex composed of at least HAT1 and HAT2. The HAT-B complex binds to histone H4 tail.

The protein localises to the cytoplasm. The protein resides in the nucleus. Regulatory subunit of the histone acetylase B (HAT-B) complex. The complex acetylates 'Lys-12' of histone H4 which is required for telomeric silencing. In Debaryomyces hansenii (strain ATCC 36239 / CBS 767 / BCRC 21394 / JCM 1990 / NBRC 0083 / IGC 2968) (Yeast), this protein is Histone acetyltransferase type B subunit 2 (HAT2).